Consider the following 350-residue polypeptide: Probable 2-dehydropantoate 2-reductase (350 aa).

NADP(+) contacts are provided by residues 9 to 14 and N115; that span reads GAGSIG. Residue N115 participates in substrate binding. K213 (proton donor) is an active-site residue. N217, N221, and S295 together coordinate substrate. E307 serves as a coordination point for NADP(+).

The protein belongs to the ketopantoate reductase family.

It catalyses the reaction (R)-pantoate + NADP(+) = 2-dehydropantoate + NADPH + H(+). It functions in the pathway cofactor biosynthesis; (R)-pantothenate biosynthesis; (R)-pantoate from 3-methyl-2-oxobutanoate: step 2/2. Functionally, catalyzes the NADPH-dependent reduction of ketopantoate into pantoic acid. The chain is Probable 2-dehydropantoate 2-reductase from Schizosaccharomyces pombe (strain 972 / ATCC 24843) (Fission yeast).